The chain runs to 226 residues: MVKKTLGRRKVEIVKMTKESNLQVTFSKRKAGLFKKASEFCTLCDAKIAMIVFSPAGKVFSFGHPNVDVLLDHFRGCVVGHNNTNLDESYTKLHVQMLNKSYTEVKAEVEKEQKNKQSRAQNERENENAEEWWSKSPLELNLSQSTCMIRVLKDLKKIVDEKAIQLIHQTNPNFYVGSSSNAAAPATVSGGNISTNQGFFDQNGMTTNPTQTLLFGFDIMNRTPGV.

The region spanning 6-66 (LGRRKVEIVK…GKVFSFGHPN (61 aa)) is the MADS-box domain. The stretch at 95 to 132 (VQMLNKSYTEVKAEVEKEQKNKQSRAQNERENENAEEW) forms a coiled coil. The segment covering 108 to 127 (EVEKEQKNKQSRAQNERENE) has biased composition (basic and acidic residues). The tract at residues 108 to 131 (EVEKEQKNKQSRAQNERENENAEE) is disordered.

It localises to the nucleus. Functionally, probable transcription factor that controls female gametophyte (megagametogenesis) development and chloroplast biogenesis during embryo development. This is Agamous-like MADS-box protein AGL23 from Arabidopsis thaliana (Mouse-ear cress).